The primary structure comprises 228 residues: MQKLKQQVFEANMDLPRYGLVTFTWGNVSAIDRERGLVVIKPSGVAYETMKADDMVVVDMSGKVVEGEYRPSSDTATHLELYRRYPSLGGIVHTHSTHATAWAQAGLAIPALGTTHADYFFGDIPCTRGLSEEEVQGEYELNTGKVIIETLGNAEPLHTPGIVVYQHGPFAWGKDAHDAVHNAVVMEEVAKMAWIARSINPQLNHIDSFLMNKHFMRKHGPNAYYGQK.

Substrate contacts are provided by residues 26–27 (GN), 43–44 (SG), and 72–73 (SS). Zn(2+) is bound by residues aspartate 74, histidine 93, and histidine 95. The active-site Proton donor/acceptor is the aspartate 118. Residue histidine 167 participates in Zn(2+) binding. Tyrosine 225 serves as the catalytic Proton donor/acceptor.

Belongs to the aldolase class II family. AraD/FucA subfamily. Zn(2+) is required as a cofactor.

It catalyses the reaction L-ribulose 5-phosphate = D-xylulose 5-phosphate. The protein operates within cofactor degradation; L-ascorbate degradation; D-xylulose 5-phosphate from L-ascorbate: step 4/4. In terms of biological role, catalyzes the isomerization of L-ribulose 5-phosphate to D-xylulose 5-phosphate. Is involved in the anaerobic L-ascorbate utilization. This Escherichia coli (strain 55989 / EAEC) protein is L-ribulose-5-phosphate 4-epimerase UlaF.